Consider the following 263-residue polypeptide: Acetylglutamate kinase (263 aa).

Substrate contacts are provided by residues Gly-48–Gly-49, Arg-70, and Asn-162.

This sequence belongs to the acetylglutamate kinase family. ArgB subfamily.

The protein localises to the cytoplasm. The catalysed reaction is N-acetyl-L-glutamate + ATP = N-acetyl-L-glutamyl 5-phosphate + ADP. It functions in the pathway amino-acid biosynthesis; L-arginine biosynthesis; N(2)-acetyl-L-ornithine from L-glutamate: step 2/4. In terms of biological role, catalyzes the ATP-dependent phosphorylation of N-acetyl-L-glutamate. The sequence is that of Acetylglutamate kinase from Vibrio campbellii (strain ATCC BAA-1116).